We begin with the raw amino-acid sequence, 525 residues long: Bifunctional purine biosynthesis protein PurH (525 aa).

Positions 1-148 (MPSNNLIKNA…KNYKNVIVIV (148 aa)) constitute an MGS-like domain.

The protein belongs to the PurH family.

The enzyme catalyses (6R)-10-formyltetrahydrofolate + 5-amino-1-(5-phospho-beta-D-ribosyl)imidazole-4-carboxamide = 5-formamido-1-(5-phospho-D-ribosyl)imidazole-4-carboxamide + (6S)-5,6,7,8-tetrahydrofolate. It catalyses the reaction IMP + H2O = 5-formamido-1-(5-phospho-D-ribosyl)imidazole-4-carboxamide. Its pathway is purine metabolism; IMP biosynthesis via de novo pathway; 5-formamido-1-(5-phospho-D-ribosyl)imidazole-4-carboxamide from 5-amino-1-(5-phospho-D-ribosyl)imidazole-4-carboxamide (10-formyl THF route): step 1/1. It functions in the pathway purine metabolism; IMP biosynthesis via de novo pathway; IMP from 5-formamido-1-(5-phospho-D-ribosyl)imidazole-4-carboxamide: step 1/1. This chain is Bifunctional purine biosynthesis protein PurH, found in Buchnera aphidicola subsp. Acyrthosiphon pisum (strain APS) (Acyrthosiphon pisum symbiotic bacterium).